The chain runs to 91 residues: Small ribosomal subunit protein uS19 (91 aa).

It belongs to the universal ribosomal protein uS19 family.

Its function is as follows. Protein S19 forms a complex with S13 that binds strongly to the 16S ribosomal RNA. This Amoebophilus asiaticus (strain 5a2) protein is Small ribosomal subunit protein uS19.